We begin with the raw amino-acid sequence, 262 residues long: 2-keto-4-pentenoate hydratase 2 (262 aa).

It belongs to the hydratase/decarboxylase family. MhpD subfamily. A divalent metal cation serves as cofactor.

The catalysed reaction is (S)-4-hydroxy-2-oxopentanoate = (2Z)-2-hydroxypenta-2,4-dienoate + H2O. It participates in aromatic compound metabolism; 3-phenylpropanoate degradation. Catalyzes the conversion of 2-hydroxypentadienoic acid (enolic form of 2-oxopent-4-enoate) to 4-hydroxy-2-ketopentanoic acid. This chain is 2-keto-4-pentenoate hydratase 2, found in Dechloromonas aromatica (strain RCB).